We begin with the raw amino-acid sequence, 428 residues long: Glucose-1-phosphate adenylyltransferase (428 aa).

Alpha-D-glucose 1-phosphate-binding positions include Tyr99, Gly164, 179–180, and Ser190; that span reads EK.

This sequence belongs to the bacterial/plant glucose-1-phosphate adenylyltransferase family. In terms of assembly, homotetramer.

It catalyses the reaction alpha-D-glucose 1-phosphate + ATP + H(+) = ADP-alpha-D-glucose + diphosphate. The protein operates within glycan biosynthesis; glycogen biosynthesis. Its function is as follows. Involved in the biosynthesis of ADP-glucose, a building block required for the elongation reactions to produce glycogen. Catalyzes the reaction between ATP and alpha-D-glucose 1-phosphate (G1P) to produce pyrophosphate and ADP-Glc. This chain is Glucose-1-phosphate adenylyltransferase, found in Thermomicrobium roseum (strain ATCC 27502 / DSM 5159 / P-2).